Reading from the N-terminus, the 458-residue chain is 3-isopropylmalate dehydratase large subunit (458 aa).

C339, C399, and C402 together coordinate [4Fe-4S] cluster.

The protein belongs to the aconitase/IPM isomerase family. LeuC type 1 subfamily. In terms of assembly, heterodimer of LeuC and LeuD. Requires [4Fe-4S] cluster as cofactor.

The enzyme catalyses (2R,3S)-3-isopropylmalate = (2S)-2-isopropylmalate. It functions in the pathway amino-acid biosynthesis; L-leucine biosynthesis; L-leucine from 3-methyl-2-oxobutanoate: step 2/4. Functionally, catalyzes the isomerization between 2-isopropylmalate and 3-isopropylmalate, via the formation of 2-isopropylmaleate. The protein is 3-isopropylmalate dehydratase large subunit of Lactococcus lactis subsp. cremoris (strain MG1363).